Consider the following 231-residue polypeptide: Large ribosomal subunit protein uL1 (231 aa).

It belongs to the universal ribosomal protein uL1 family. Part of the 50S ribosomal subunit.

Binds directly to 23S rRNA. The L1 stalk is quite mobile in the ribosome, and is involved in E site tRNA release. Its function is as follows. Protein L1 is also a translational repressor protein, it controls the translation of the L11 operon by binding to its mRNA. The sequence is that of Large ribosomal subunit protein uL1 from Agrobacterium fabrum (strain C58 / ATCC 33970) (Agrobacterium tumefaciens (strain C58)).